Consider the following 3707-residue polypeptide: CUB and sushi domain-containing protein 3 (3707 aa).

The tract at residues 1–21 is disordered; it reads MKGIRKGESRAKESKPWEPGK. Residues 1–42 are Cytoplasmic-facing; sequence MKGIRKGESRAKESKPWEPGKRRCAKCGRLDFILMKKMGIKS. Residues 43-63 form a helical membrane-spanning segment; that stretch reads GFTFWNLVFLLTVSCVKGFIY. The Extracellular segment spans residues 64–3630; it reads TCGGTLKGLN…NQPHGTNSSS (3567 aa). Disulfide bonds link Cys-65/Cys-91, Cys-178/Cys-218, Cys-204/Cys-235, and Cys-241/Cys-267. The CUB 1 domain occupies 65-173; that stretch reads CGGTLKGLNG…HGFKVYYEEL (109 aa). N-linked (GlcNAc...) asparagine glycans are attached at residues Asn-73 and Asn-90. The Sushi 1 domain occupies 176–237; sequence SSCGNPGVPP…WDFPVPICRA (62 aa). The CUB 2 domain maps to 241–345; that stretch reads CGGTMRGSSG…RGFSAPYQGS (105 aa). N-linked (GlcNAc...) asparagine glycans are attached at residues Asn-361 and Asn-409. Residues 394–435 form a disordered region; sequence QRVQVTSLRNSGLDPNTSKDGLSPHPADTQSTRRRPRHAEQI. Residues 396–413 are compositionally biased toward polar residues; the sequence is VQVTSLRNSGLDPNTSKD. A Sushi 2 domain is found at 484–545; that stretch reads NLCPDPGEPE…WSDHRPVCKV (62 aa). 6 cysteine pairs are disulfide-bonded: Cys-486–Cys-526, Cys-512–Cys-543, Cys-548–Cys-574, Cys-664–Cys-704, Cys-690–Cys-717, and Cys-721–Cys-747. In terms of domain architecture, CUB 3 spans 548 to 659; sequence CGSNLQGPSG…VGFKVNYKEI (112 aa). Residues 662-719 form the Sushi 3 domain; the sequence is ESCGDPGTPLYGIREGDGFSNRDVLRFECQFGFELIGEKSIVCQENNQWSANIPICIF. Residues 721–829 enclose the CUB 4 domain; that stretch reads CLSNFTAPMG…RGFNITYNTF (109 aa). N-linked (GlcNAc...) asparagine glycans are attached at residues Asn-724 and Asn-823. The Sushi 4 domain maps to 832–893; sequence NECPDPGIPI…WSGLIPKCGA (62 aa). Disulfide bonds link Cys-834-Cys-875, Cys-860-Cys-891, and Cys-895-Cys-921. The region spanning 895–1003 is the CUB 5 domain; that stretch reads CGGHFSAPSG…NGFKIHYESV (109 aa). N-linked (GlcNAc...) asparagine glycosylation is present at Asn-966. Residues 1008–1065 enclose the Sushi 5 domain; that stretch reads YSCLDPGIPVHGRRYGHDFSIGSTVSFSCDSGYRLSHEEPLLCEKNHWWSHPLPTCDA. Intrachain disulfides connect Cys-1010–Cys-1050, Cys-1036–Cys-1063, and Cys-1067–Cys-1093. The region spanning 1067–1177 is the CUB 6 domain; it reads CGGDVRGPSG…EGFNITFSEY (111 aa). N-linked (GlcNAc...) asparagine glycosylation is found at Asn-1092, Asn-1126, and Asn-1171. Residues 1180–1239 enclose the Sushi 6 domain; that stretch reads EPCEDPGIPQYGSRIGFNFGIGDTLTFSCSSGYRLEGTSEIICLGGGRRVWSAPLPRCVA. 3 cysteine pairs are disulfide-bonded: Cys-1182–Cys-1222, Cys-1208–Cys-1237, and Cys-1241–Cys-1267. Residues 1241 to 1349 enclose the CUB 7 domain; the sequence is CGASATNNEG…EGFQLVYTSF (109 aa). Asn-1280 is a glycosylation site (N-linked (GlcNAc...) asparagine). Residues 1352-1412 form the Sushi 7 domain; sequence SHCEDPGIPQ…WDYPLPSCIA (61 aa). Intrachain disulfides connect Cys-1354/Cys-1395, Cys-1381/Cys-1410, Cys-1414/Cys-1441, Cys-1528/Cys-1568, Cys-1554/Cys-1584, Cys-1588/Cys-1614, Cys-1701/Cys-1741, Cys-1727/Cys-1758, Cys-1762/Cys-1788, Cys-1878/Cys-1918, Cys-1904/Cys-1935, and Cys-1939/Cys-1965. The CUB 8 domain occupies 1414–1523; it reads CGGRFKGESS…SGFAIQFSSS (110 aa). Residues 1526 to 1586 enclose the Sushi 8 domain; that stretch reads TACRDPGVPM…WQPSPPVCIA (61 aa). Asn-1536 carries an N-linked (GlcNAc...) asparagine glycan. Positions 1588–1696 constitute a CUB 9 domain; the sequence is CGGNLTGSSG…TGFHLEYKAK (109 aa). Residues Asn-1591 and Asn-1709 are each glycosylated (N-linked (GlcNAc...) asparagine). One can recognise a Sushi 9 domain in the interval 1699–1760; that stretch reads ESCFDPGNIM…WNRALPSCHA (62 aa). A CUB 10 domain is found at 1762–1870; it reads CGSRSTGSEG…KGFHFVYQAV (109 aa). The N-linked (GlcNAc...) asparagine glycan is linked to Asn-1781. A Sushi 10 domain is found at 1876–1937; it reads TQCSSVPEPR…WNDSLPTCIV (62 aa). Asn-1929 carries an N-linked (GlcNAc...) asparagine glycan. The region spanning 1939-2047 is the CUB 11 domain; sequence CGGILTKRKG…AGFHLEYTAI (109 aa). A glycan (N-linked (GlcNAc...) asparagine) is linked at Asn-2019. The Sushi 11 domain maps to 2050–2109; the sequence is DSCPEPQTPSSGIKIGDRYMVGDVVSFQCDQGYSLQGHSHITCMPGPVRRWNYPIPICLA. 3 disulfide bridges follow: Cys-2052-Cys-2092, Cys-2078-Cys-2107, and Cys-2111-Cys-2137. The region spanning 2111–2219 is the CUB 12 domain; it reads CGGAMSDFSG…QGFHIVYQAY (109 aa). The N-linked (GlcNAc...) asparagine glycan is linked to Asn-2155. In terms of domain architecture, Sushi 12 spans 2222–2281; it reads QSCPDPRPFRNGFVIGNDFTVGQTISFECFPGYTLIGNSALTCLHGVSRNWNHPLPRCEA. 3 cysteine pairs are disulfide-bonded: Cys-2224-Cys-2264, Cys-2250-Cys-2279, and Cys-2283-Cys-2309. One can recognise a CUB 13 domain in the interval 2283–2394; the sequence is CGGNITAMNG…LSYHAYQLRV (112 aa). Residues Asn-2286, Asn-2291, and Asn-2324 are each glycosylated (N-linked (GlcNAc...) asparagine). The Sushi 13 domain occupies 2393–2454; it reads RVCQPPPPVP…MDGAPPVCQV (62 aa). Intrachain disulfides connect Cys-2395–Cys-2437, Cys-2423–Cys-2452, and Cys-2456–Cys-2484. Residues 2456–2567 form the CUB 14 domain; it reads CPANELRLDS…KGFRIRYIAF (112 aa). N-linked (GlcNAc...) asparagine glycans are attached at residues Asn-2495 and Asn-2537. Sushi domains follow at residues 2567–2629, 2630–2691, 2692–2756, 2757–2814, 2815–2872, 2873–2930, 2931–2992, 2993–3050, 3054–3111, 3112–3170, 3171–3230, 3231–3288, 3289–3346, 3350–3408, and 3409–3468; these read FYCS…ACQA, ISCG…RCVV, VTCP…YCQI, ISCG…RCLA, GHCG…SCVP, VSCG…MCKV, VNCS…ECIM, IDCG…HCSG, GTCG…ECKA, VQCG…NCTI, ISCG…TCRA, VTCP…QCLP, KFCG…HCIE, TSCE…ECIP, and HSCK…ICEA. Disulfide bonds link Cys-2569/Cys-2610, Cys-2596/Cys-2627, Cys-2632/Cys-2674, Cys-2658/Cys-2689, Cys-2694/Cys-2739, Cys-2725/Cys-2754, Cys-2759/Cys-2799, Cys-2785/Cys-2812, Cys-2817/Cys-2857, Cys-2843/Cys-2870, Cys-2875/Cys-2915, and Cys-2901/Cys-2928. Asn-2711 and Asn-2742 each carry an N-linked (GlcNAc...) asparagine glycan. An N-linked (GlcNAc...) asparagine glycan is attached at Asn-2862. Asn-2932 and Asn-2952 each carry an N-linked (GlcNAc...) asparagine glycan. 18 disulfide bridges follow: Cys-2933–Cys-2977, Cys-2963–Cys-2990, Cys-2995–Cys-3035, Cys-3021–Cys-3048, Cys-3056–Cys-3096, Cys-3082–Cys-3109, Cys-3114–Cys-3155, Cys-3141–Cys-3168, Cys-3173–Cys-3215, Cys-3199–Cys-3228, Cys-3233–Cys-3273, Cys-3259–Cys-3286, Cys-3291–Cys-3331, Cys-3317–Cys-3344, Cys-3352–Cys-3393, Cys-3379–Cys-3406, Cys-3411–Cys-3453, and Cys-3438–Cys-3466. The N-linked (GlcNAc...) asparagine glycan is linked to Asn-3099. Residues Asn-3158, Asn-3167, Asn-3194, Asn-3208, and Asn-3218 are each glycosylated (N-linked (GlcNAc...) asparagine). The N-linked (GlcNAc...) asparagine glycan is linked to Asn-3276. A glycan (N-linked (GlcNAc...) asparagine) is linked at Asn-3364. N-linked (GlcNAc...) asparagine glycans are attached at residues Asn-3522, Asn-3529, Asn-3612, Asn-3618, and Asn-3627. A helical membrane pass occupies residues 3631 to 3651; sequence VAIAILVPFFALIFAGFGFYL. The Cytoplasmic portion of the chain corresponds to 3652-3707; it reads YKQRTAPKTQYTGCSVHENNNGQAAFENPMYDTNAKSVEGKAVRFDPNLNTVCTMV.

Belongs to the CSMD family. Weakly expressed in most tissues, except in brain. Expressed at intermediate level in brain, including cerebellum, substantia nigra, thalamus, spinal cord, hippocampus and fetal brain. Also expressed in testis.

It is found in the cell membrane. Its function is as follows. Involved in dendrite development. The protein is CUB and sushi domain-containing protein 3 (CSMD3) of Homo sapiens (Human).